The following is a 552-amino-acid chain: Protein TRM32 (552 aa).

A disordered region spans residues 295 to 379 (TDLPRDSSTS…NKTAEKTETL (85 aa)). The segment covering 331–351 (VRAEKEEKYEVQEERSQENHL) has biased composition (basic and acidic residues). The segment covering 352–371 (DSSNQRILQQEPDSVPSTNK) has biased composition (polar residues).

The sequence is that of Protein TRM32 (TRM32) from Arabidopsis thaliana (Mouse-ear cress).